We begin with the raw amino-acid sequence, 369 residues long: Flagellar P-ring protein (369 aa).

Positions 1–24 (MSKTISLLKFIICILISLCSFTYA) are cleaved as a signal peptide.

It belongs to the FlgI family. As to quaternary structure, the basal body constitutes a major portion of the flagellar organelle and consists of four rings (L,P,S, and M) mounted on a central rod.

The protein resides in the bacterial flagellum basal body. Its function is as follows. Assembles around the rod to form the L-ring and probably protects the motor/basal body from shearing forces during rotation. This Buchnera aphidicola subsp. Schizaphis graminum (strain Sg) protein is Flagellar P-ring protein.